A 196-amino-acid chain; its full sequence is Zinc metalloproteinase-disintegrin-like bothrojarin-3 (196 aa).

In terms of domain architecture, Disintegrin spans 2-88; sequence PPVCGTELLE…DCPTDDIQRN (87 aa). Ca(2+)-binding residues include valine 4, leucine 9, glutamate 11, glutamate 14, and aspartate 17. Disulfide bonds link cysteine 5/cysteine 34, cysteine 16/cysteine 29, cysteine 18/cysteine 24, cysteine 28/cysteine 51, cysteine 42/cysteine 48, cysteine 47/cysteine 73, cysteine 60/cysteine 80, cysteine 67/cysteine 99, cysteine 92/cysteine 104, cysteine 111/cysteine 161, cysteine 126/cysteine 168, cysteine 139/cysteine 149, and cysteine 156/cysteine 193. The D/ECD-tripeptide signature appears at 66–68; it reads ECD.

The protein belongs to the venom metalloproteinase (M12B) family. P-III subfamily. P-IIIa sub-subfamily. Monomer. Zn(2+) serves as cofactor. Glycosylated. As to expression, expressed by the venom gland.

Its subcellular location is the secreted. The hemorrhagic metalloproteinase-disintegrin-like bothrojarin-1 is a potent inhibitor of collagen-induced platelet aggregation by blockage of alpha-2/beta-1 (ITGA2/ITGB1) integrin. It does not present any fibrinogen-clotting activity. The chain is Zinc metalloproteinase-disintegrin-like bothrojarin-3 from Bothrops jararaca (Jararaca).